Reading from the N-terminus, the 71-residue chain is Protein SlyX homolog (71 aa).

Belongs to the SlyX family.

The polypeptide is Protein SlyX homolog (Rhodopseudomonas palustris (strain BisB5)).